The primary structure comprises 215 residues: Soluble inorganic pyrophosphatase (215 aa).

The span at 1 to 21 (MSQEDSTSAAAAQQPTSRPAP) shows a compositional bias: low complexity. Residues 1-24 (MSQEDSTSAAAAQQPTSRPAPKLN) form a disordered region. Residues Asp103, Asp108, and Asp140 each coordinate Mg(2+).

The protein belongs to the PPase family. It depends on Mg(2+) as a cofactor. In terms of tissue distribution, expressed in metabolically active tissue such as root, shoot, embryo and aleurone.

Its subcellular location is the cytoplasm. The enzyme catalyses diphosphate + H2O = 2 phosphate + H(+). Its function is as follows. May play a role in germination. The polypeptide is Soluble inorganic pyrophosphatase (IPP) (Hordeum vulgare subsp. vulgare (Domesticated barley)).